Reading from the N-terminus, the 366-residue chain is Actin-like protein 8 (366 aa).

This sequence belongs to the actin family. As to expression, strongly expressed in testis and pancreas. Weak expression in placenta.

The protein localises to the cytoplasm. Its subcellular location is the cytoskeleton. This is Actin-like protein 8 (ACTL8) from Homo sapiens (Human).